A 221-amino-acid polypeptide reads, in one-letter code: Large ribosomal subunit protein uL16A (221 aa).

It belongs to the universal ribosomal protein uL16 family. Component of the large ribosomal subunit (LSU). Mature yeast ribosomes consist of a small (40S) and a large (60S) subunit. The 40S small subunit contains 1 molecule of ribosomal RNA (18S rRNA) and at least 33 different proteins. The large 60S subunit contains 3 rRNA molecules (25S, 5.8S and 5S rRNA) and at least 46 different proteins.

The protein localises to the cytoplasm. Its function is as follows. Component of the ribosome, a large ribonucleoprotein complex responsible for the synthesis of proteins in the cell. The small ribosomal subunit (SSU) binds messenger RNAs (mRNAs) and translates the encoded message by selecting cognate aminoacyl-transfer RNA (tRNA) molecules. The large subunit (LSU) contains the ribosomal catalytic site termed the peptidyl transferase center (PTC), which catalyzes the formation of peptide bonds, thereby polymerizing the amino acids delivered by tRNAs into a polypeptide chain. The nascent polypeptides leave the ribosome through a tunnel in the LSU and interact with protein factors that function in enzymatic processing, targeting, and the membrane insertion of nascent chains at the exit of the ribosomal tunnel. The sequence is that of Large ribosomal subunit protein uL16A (rpl1001) from Schizosaccharomyces pombe (strain 972 / ATCC 24843) (Fission yeast).